Consider the following 343-residue polypeptide: Cyclin-Y-like protein 1 (343 aa).

A disordered region spans residues 1–48 (MGNTVTCCVSPDASPKAGRDRAVTERGEPYQAQVELQETDPGPHLQHI). The span at 17–28 (AGRDRAVTERGE) shows a compositional bias: basic and acidic residues. The Cyclin N-terminal domain maps to 145-267 (EIFDEKLHPL…FLELLQFNIN (123 aa)).

It belongs to the cyclin family. Cyclin Y subfamily.

It is found in the cell membrane. In terms of biological role, key regulator of Wnt signaling implicated in various biological processes, such as embryonic neurogenesis. This Xenopus tropicalis (Western clawed frog) protein is Cyclin-Y-like protein 1 (ccnyl1).